The chain runs to 1774 residues: Kinesin-like protein KIF20B (1774 aa).

The region spanning Tyr58–Val477 is the Kinesin motor domain. Gly152–Thr159 serves as a coordination point for ATP. Ser486 bears the Phosphoserine mark. Coiled-coil stretches lie at residues Glu525–Glu601 and Gln705–Ala747. Positions Glu538 to Ser555 are enriched in acidic residues. Disordered stretches follow at residues Glu538 to Lys557 and Glu740 to Lys799. Residues Ser741–Gln778 show a composition bias toward polar residues. Positions Thr779 to Glu788 are enriched in basic and acidic residues. Residues Ser824–Arg946 are a coiled coil. The residue at position 950 (Ser950) is a Phosphoserine. Residues Glu1002 to Ser1059 are necessary and sufficient for interaction with SHTN1. Residues Lys1021–Ala1507 are a coiled coil. Phosphoserine occurs at positions 1107 and 1542. The interval Thr1514–Lys1774 is interaction with PIN1. Residue Thr1598 is modified to Phosphothreonine; by CDK1. Ser1612 carries the phosphoserine modification. The disordered stretch occupies residues Lys1625 to Ser1663. The span at Val1638–Lys1651 shows a compositional bias: basic and acidic residues. Residues Ser1669 and Ser1694 each carry the phosphoserine modification.

This sequence belongs to the TRAFAC class myosin-kinesin ATPase superfamily. Kinesin family. Oligomerizes (via kinesin motor domain). Associates with microtubules. Interacts (via C-terminal globular tail region) with PIN1 (via WW domain). Interacts with PRC1. Interacts with SHTN1 (via N-terminus); the interaction is direct and promotes the association of SHTN1 to microtubules in primary neurons. Associates with microtubules. In terms of processing, phosphorylated during mitosis by CDK1. In terms of tissue distribution, expressed in the brain (at protein level).

The protein localises to the nucleus. It localises to the cytoplasm. Its subcellular location is the cytoskeleton. The protein resides in the microtubule organizing center. It is found in the centrosome. The protein localises to the nucleolus. It localises to the nucleoplasm. Its subcellular location is the spindle. The protein resides in the spindle pole. It is found in the midbody. The protein localises to the cell projection. It localises to the axon. Its subcellular location is the growth cone. Plus-end-directed motor enzyme that is required for completion of cytokinesis. Required for proper midbody organization and abscission in polarized cortical stem cells. Plays a role in the regulation of neuronal polarization by mediating the transport of specific cargos. Participates in the mobilization of SHTN1 and in the accumulation of PIP3 in the growth cone of primary hippocampal neurons in a tubulin and actin-dependent manner. In the developing telencephalon, cooperates with SHTN1 to promote both the transition from the multipolar to the bipolar stage and the radial migration of cortical neurons from the ventricular zone toward the superficial layer of the neocortex. Involved in cerebral cortex growth. Acts as an oncogene for promoting bladder cancer cells proliferation, apoptosis inhibition and carcinogenic progression. The sequence is that of Kinesin-like protein KIF20B from Mus musculus (Mouse).